We begin with the raw amino-acid sequence, 414 residues long: Esterase FrsA (414 aa).

It belongs to the FrsA family.

The catalysed reaction is a carboxylic ester + H2O = an alcohol + a carboxylate + H(+). Catalyzes the hydrolysis of esters. The protein is Esterase FrsA of Salmonella agona (strain SL483).